We begin with the raw amino-acid sequence, 156 residues long: Melatonin receptor type 1A (156 aa).

3 consecutive transmembrane segments (helical) span residues 19-39 (LCYVFLIWTLTLIAIMPNLQT), 62-82 (TIALVVFHFVVPMIIVTFCYL), and 115-135 (FVVFVLFALCWAPLNFIGLIV).

The protein belongs to the G-protein coupled receptor 1 family. In terms of tissue distribution, at least in the brain, more precisely in the pars tuberalis and the suprachiasmatic nucleus.

It is found in the cell membrane. Functionally, high affinity receptor for melatonin. Likely to mediate the reproductive and circadian actions of melatonin. The activity of this receptor is mediated by pertussis toxin sensitive G proteins that inhibit adenylate cyclase activity. Possibly involved in sleep induction, by melatonin activation of the potassium channel KCNMA1/BK and the dissociation of G-beta and G-gamma subunits, thereby decreasing synaptic transmission. This Rattus norvegicus (Rat) protein is Melatonin receptor type 1A (Mtnr1a).